Here is a 1589-residue protein sequence, read N- to C-terminus: MSDTNTSIPNTSSAREAGNASQTPSISSSSNTSTTTNTESSSASLSSSPSTSELTSIRPIGIVVAAYDFNYPIKKDSSSQLLSVQQGETIYILNKNSSGWWDGLVIDDSNGKVNRGWFPQNFGRPLRDSHLRKHSHPMKKYSSSKSSRRSSLNSLGNSAYLHVPRNPSKSRRGSSTLSASLSNAHNAETSSGHNNTVSMNNSPFSAPNDASHITPQSSNFNSNASLSQDMTKSADGSSEMNTNAIMNNNETNLQTSGEKAGPPLVAEETIKILPLEEIEMIINGIRSNIASTWSPIPLITKTSDYKLVYYNKDLDIYCSELPLISNSIMESDDICDSEPKFPPNDHLVNLYTRDLRKNANIEDSSTRSKQSESEQNRSSLLMEKQDSKETDGNNNSINDDDNNNENNKNEFNEAGPSSLNSLSAPDLTQNIQSRVVAPSRSSILAKSDIFYHYSRDIKLWTELQDLTVYYTKTAHKMFLKENRLNFTKYFDLISDSIVFTQLGCRLMQHEIKAKSCSKEIKKIFKGLISSLSRISINSHLYFDSAFHRKKMDTMNDKDNDNQENNCSRTEGDDGKIEVDSVHDLVSVPLSGKRNVSTSTTDTLTPMRSSFSTVNENDMENFSVLGPRNSVNSVVTPRTSIQNSTLEDFSPSNKNFKSAKSIYEMVDVEFSKFLRHVQLLYFVLQSSVFSDDNTLPQLLPRFFKGSFSGGSWTNPFSTFITDEFGNATKNKAVTSNEVTASSSKNSSISRIPPKMADAIASASGYSANSETNSQIDLKASSAASGSVFTPFNRPSHNRTFSRARVSKRKKKYPLTVDTLNTMKKKSSQIFEKLNNATGEHLKIISKPKSRIRNLEINSSTYEQINQNVLLLEILENLDLSIFINLKNLIKTPSILLDLESEEFLVHAMSSVSSVLTEFFDIKQAFHDIVIRLIMTTQQTTLDDPYLFSSMRSNFPVGHHEPFKNISNTPLVKGPFHKKNEQLALSLFHVLVSQDVEFNNLEFLNNSDDFKDACEKYVEISNLACIIVDQLIEERENLLNYAARMMKNNLTAELLKGEQEKWFDIYSEDYSDDDSENDEAIIDDELGSEDYIERKAANIEKNLPWFLTSDYETSLVYDSRGKIRGGTKEALIEHLTSHELVDAAFNVTMLITFRSILTTREFFYALIYRYNLYPPEGLSYDDYNIWIEKKSNPIKCRVVNIMRTFLTQYWTRNYYEPGIPLILNFAKMVVSEKIPGAEDLLQKINEKLINENEKEPVDPKQQDSVSAVVQTTKRDNKSPIHMSSSSLPSSASSAFFRLKKLKLLDIDPYTYATQLTVLEHDLYLRITMFECLDRAWGTKYCNMGGSPNITKFIANANTLTNFVSHTIVKQADVKTRSKLTQYFVTVAQHCKELNNFSSMTAIVSALYSSPIYRLKKTWDLVSTESKDLLKNLNNLMDSKRNFVKYRELLRSVTDVACVPFFGVYLSDLTFTFVGNPDFLHNSTNIINFSKRTKIANIVEEIISFKRFHYKLKRLDDIQTVIEASLENVPHIEKQYQLSLQVEPRSGNTKGSTHASSASGTKTAKFLSEFTDDKNGNFLKLGKKKPPSRLFR.

Polar residues predominate over residues 1–14 (MSDTNTSIPNTSSA). Disordered regions lie at residues 1 to 53 (MSDT…STSE), 121 to 243 (NFGR…MNTN), 359 to 424 (ANIE…SLSA), and 553 to 574 (TMND…GDDG). Residues 20 to 53 (ASQTPSISSSSNTSTTTNTESSSASLSSSPSTSE) are compositionally biased toward low complexity. Positions 58–128 (RPIGIVVAAY…PQNFGRPLRD (71 aa)) constitute an SH3 domain. Over residues 130-139 (HLRKHSHPMK) the composition is skewed to basic residues. The segment covering 143 to 158 (SSKSSRRSSLNSLGNS) has biased composition (low complexity). Phosphoserine is present on residues S151 and S154. Composition is skewed to polar residues over residues 173-205 (GSST…SPFS) and 211-238 (SHIT…DGSS). The segment covering 359-375 (ANIEDSSTRSKQSESEQ) has biased composition (basic and acidic residues). Residues 415 to 424 (GPSSLNSLSA) show a composition bias toward polar residues. Phosphoserine is present on S423. A phosphoserine mark is found at S580, S596, and S632. A Phosphothreonine modification is found at T635. Residue S649 is modified to Phosphoserine. One can recognise an N-terminal Ras-GEF domain in the interval 1117 to 1247 (SRGKIRGGTK…LLQKINEKLI (131 aa)). The span at 1249–1259 (ENEKEPVDPKQ) shows a compositional bias: basic and acidic residues. The disordered stretch occupies residues 1249–1287 (ENEKEPVDPKQQDSVSAVVQTTKRDNKSPIHMSSSSLPS). Residues 1260 to 1269 (QDSVSAVVQT) show a composition bias toward polar residues. The 238-residue stretch at 1305–1542 (DPYTYATQLT…YQLSLQVEPR (238 aa)) folds into the Ras-GEF domain. Residues 1452-1473 (DVACVPFFGVYLSDLTFTFVGN) traverse the membrane as a helical segment. A disordered region spans residues 1570-1589 (DKNGNFLKLGKKKPPSRLFR). Positions 1578-1589 (LGKKKPPSRLFR) are enriched in basic residues.

Its subcellular location is the membrane. Promotes the exchange of Ras-bound GDP by GTP. This protein positively controls the level of cellular cAMP at start, the stage at which the yeast cell division cycle is triggered. This Saccharomyces cerevisiae (strain ATCC 204508 / S288c) (Baker's yeast) protein is Cell division control protein 25 (CDC25).